A 279-amino-acid polypeptide reads, in one-letter code: Protein ABIL4 (279 aa).

Disordered stretches follow at residues 192 to 211 (VHNN…PMRF) and 219 to 241 (LLKR…EPQR). Residues 194 to 208 (NNINNRTPNKRSNSP) show a composition bias toward polar residues. Residues 219–228 (LLKRSSSPSQ) show a composition bias toward low complexity.

It belongs to the ABI family. Binds SCAR.

The protein resides in the cytoplasm. The protein localises to the cytoskeleton. Involved in regulation of actin and microtubule organization. Part of a WAVE complex that activates the Arp2/3 complex. This Arabidopsis thaliana (Mouse-ear cress) protein is Protein ABIL4 (ABIL4).